The sequence spans 361 residues: Outer mitochondrial transmembrane helix translocase (361 aa).

Over 1–15 (MVHAEAFSRPLSRNE) the chain is Mitochondrial intermembrane. Residues 16-32 (VVGLIFRLTIFGAVTYF) traverse the membrane as a helical segment. Topologically, residues 33–361 (TIKWMVDAID…QNVLTHVCLD (329 aa)) are cytoplasmic. 133 to 140 (GPPGCGKT) is a binding site for ATP. Position 322 is a phosphoserine (S322).

This sequence belongs to the AAA ATPase family. MSP1 subfamily. As to quaternary structure, interacts with GRIA2 and GRIP1 in an ATP-dependent manner. ATAD1-catalyzed ATP hydrolysis disrupts not only its binding to GRIA2 and GRIP1, but also interaction between GRIP1 and GRIA2, leading to AMPAR complex disassembly.

It localises to the mitochondrion outer membrane. It is found in the peroxisome membrane. Its subcellular location is the postsynaptic cell membrane. The catalysed reaction is [protein]-with a C-terminal TM segment(out) + ATP + H2O = [protein]-with a C-terminal TM segment(in) + ADP + phosphate + H(+). Functionally, outer mitochondrial translocase required to remove mislocalized tail-anchored transmembrane proteins on mitochondria. Specifically recognizes and binds tail-anchored transmembrane proteins: acts as a dislocase that mediates the ATP-dependent extraction of mistargeted tail-anchored transmembrane proteins from the mitochondrion outer membrane. Also plays a critical role in regulating the surface expression of AMPA receptors (AMPAR), thereby regulating synaptic plasticity and learning and memory. Required for NMDA-stimulated AMPAR internalization and inhibition of GRIA1 and GRIA2 recycling back to the plasma membrane; these activities are ATPase-dependent. This is Outer mitochondrial transmembrane helix translocase from Homo sapiens (Human).